A 429-amino-acid polypeptide reads, in one-letter code: Histidinol dehydrogenase (429 aa).

The NAD(+) site is built by tyrosine 127, glutamine 188, and asparagine 211. Substrate-binding residues include serine 234, glutamine 256, and histidine 259. Residues glutamine 256 and histidine 259 each contribute to the Zn(2+) site. Catalysis depends on proton acceptor residues glutamate 324 and histidine 325. Residues histidine 325, aspartate 358, glutamate 412, and histidine 417 each contribute to the substrate site. Aspartate 358 is a binding site for Zn(2+). Histidine 417 provides a ligand contact to Zn(2+).

This sequence belongs to the histidinol dehydrogenase family. It depends on Zn(2+) as a cofactor.

The catalysed reaction is L-histidinol + 2 NAD(+) + H2O = L-histidine + 2 NADH + 3 H(+). The protein operates within amino-acid biosynthesis; L-histidine biosynthesis; L-histidine from 5-phospho-alpha-D-ribose 1-diphosphate: step 9/9. Catalyzes the sequential NAD-dependent oxidations of L-histidinol to L-histidinaldehyde and then to L-histidine. In Bacillus thuringiensis subsp. konkukian (strain 97-27), this protein is Histidinol dehydrogenase.